A 237-amino-acid polypeptide reads, in one-letter code: uncharacterized protein (237 aa).

Residues M1–G25 constitute a signal peptide (tat-type signal). Positions I201 to P237 are disordered.

Exported by the Tat system. The position of the signal peptide cleavage has not been experimentally proven. Can also be exported by the Sec system.

This is an uncharacterized protein from Escherichia coli (strain K12).